Here is a 361-residue protein sequence, read N- to C-terminus: Holliday junction branch migration complex subunit RuvB (361 aa).

Residues 1 to 12 (MNWDETGPETDE) show a composition bias toward acidic residues. The interval 1–21 (MNWDETGPETDEPTGPVLDDR) is disordered. A large ATPase domain (RuvB-L) region spans residues 13 to 199 (PTGPVLDDRL…FGFTGHMEFY (187 aa)). ATP contacts are provided by residues leucine 38, arginine 39, glycine 80, lysine 83, threonine 84, threonine 85, 146-148 (EDF), arginine 189, tyrosine 199, and arginine 236. Threonine 84 contacts Mg(2+). The interval 200 to 270 (APAELERVLH…IAMAALKVYE (71 aa)) is small ATPAse domain (RuvB-S). The tract at residues 273–361 (ARGLDRLDRA…AKGQQGLFGA (89 aa)) is head domain (RuvB-H). 3 residues coordinate DNA: arginine 309, arginine 328, and arginine 333.

It belongs to the RuvB family. Homohexamer. Forms an RuvA(8)-RuvB(12)-Holliday junction (HJ) complex. HJ DNA is sandwiched between 2 RuvA tetramers; dsDNA enters through RuvA and exits via RuvB. An RuvB hexamer assembles on each DNA strand where it exits the tetramer. Each RuvB hexamer is contacted by two RuvA subunits (via domain III) on 2 adjacent RuvB subunits; this complex drives branch migration. In the full resolvosome a probable DNA-RuvA(4)-RuvB(12)-RuvC(2) complex forms which resolves the HJ.

Its subcellular location is the cytoplasm. The catalysed reaction is ATP + H2O = ADP + phosphate + H(+). The RuvA-RuvB-RuvC complex processes Holliday junction (HJ) DNA during genetic recombination and DNA repair, while the RuvA-RuvB complex plays an important role in the rescue of blocked DNA replication forks via replication fork reversal (RFR). RuvA specifically binds to HJ cruciform DNA, conferring on it an open structure. The RuvB hexamer acts as an ATP-dependent pump, pulling dsDNA into and through the RuvAB complex. RuvB forms 2 homohexamers on either side of HJ DNA bound by 1 or 2 RuvA tetramers; 4 subunits per hexamer contact DNA at a time. Coordinated motions by a converter formed by DNA-disengaged RuvB subunits stimulates ATP hydrolysis and nucleotide exchange. Immobilization of the converter enables RuvB to convert the ATP-contained energy into a lever motion, pulling 2 nucleotides of DNA out of the RuvA tetramer per ATP hydrolyzed, thus driving DNA branch migration. The RuvB motors rotate together with the DNA substrate, which together with the progressing nucleotide cycle form the mechanistic basis for DNA recombination by continuous HJ branch migration. Branch migration allows RuvC to scan DNA until it finds its consensus sequence, where it cleaves and resolves cruciform DNA. The protein is Holliday junction branch migration complex subunit RuvB of Streptomyces griseus subsp. griseus (strain JCM 4626 / CBS 651.72 / NBRC 13350 / KCC S-0626 / ISP 5235).